Consider the following 282-residue polypeptide: Tetraspanin-6 (282 aa).

At 1-7 (MYRFSNT) the chain is on the cytoplasmic side. Residues 8–28 (VIGVLNLLTLLASIPIIGTAL) traverse the membrane as a helical segment. The Extracellular portion of the chain corresponds to 29-44 (YKARSSTTCENFLQTP). Residues 45-65 (LLVIGFIILIVSLAGFIGACF) traverse the membrane as a helical segment. Residues 66–74 (NVAWALWVY) are Cytoplasmic-facing. A helical transmembrane segment spans residues 75–95 (LVVMIFLIATLMGLTLFGLVV). At 96–220 (TSQGGGVEVP…EIRLDWRKLS (125 aa)) the chain is on the extracellular side. A helical transmembrane segment spans residues 221–241 (VVNILVLVLLIAVYAAGCCAF). Residues 242–282 (HNTRHAAHPYHPSDDNRMTRVRPRWDYYWWRWWHEKKEQLY) lie on the Cytoplasmic side of the membrane.

The protein belongs to the tetraspanin (TM4SF) family.

The protein resides in the membrane. In terms of biological role, may be involved in the regulation of cell differentiation. The sequence is that of Tetraspanin-6 (TET6) from Arabidopsis thaliana (Mouse-ear cress).